The following is a 590-amino-acid chain: KNR4/SMI1 homolog 2 (590 aa).

3 disordered regions span residues 59–97, 216–239, and 407–590; these read SSSH…SNTN, FQHQ…ETHG, and TPQR…DVAL. Residues 71–85 are compositionally biased toward polar residues; the sequence is GSRTSLSRNGSSTTV. Residues 217 to 226 show a composition bias toward low complexity; sequence QHQQQQQQHQ. Residues 430-454 show a composition bias toward polar residues; it reads PSMSGATANTNKSQNPLINMESSSK. 2 stretches are compositionally biased toward basic and acidic residues: residues 470–481 and 489–515; these read PEEPVKKSEVKS and EPEK…AKED. Residues 516-528 show a composition bias toward acidic residues; sequence DKEEEEEEQEEEK. Positions 554 to 568 are enriched in basic residues; it reads TQKKNQSKKAKKQQQ. Residues 576–590 are compositionally biased toward acidic residues; sequence NDVEEVAEDLNDVAL.

Belongs to the KNR4/SMI1 family.

This is KNR4/SMI1 homolog 2 from Debaryomyces hansenii (strain ATCC 36239 / CBS 767 / BCRC 21394 / JCM 1990 / NBRC 0083 / IGC 2968) (Yeast).